Here is a 134-residue protein sequence, read N- to C-terminus: ATP synthase epsilon chain, chloroplastic (134 aa).

The protein belongs to the ATPase epsilon chain family. In terms of assembly, F-type ATPases have 2 components, CF(1) - the catalytic core - and CF(0) - the membrane proton channel. CF(1) has five subunits: alpha(3), beta(3), gamma(1), delta(1), epsilon(1). CF(0) has three main subunits: a, b and c.

Its subcellular location is the plastid. The protein resides in the chloroplast thylakoid membrane. Produces ATP from ADP in the presence of a proton gradient across the membrane. This chain is ATP synthase epsilon chain, chloroplastic, found in Pyropia yezoensis (Susabi-nori).